The sequence spans 342 residues: Succinylglutamate desuccinylase (342 aa).

Zn(2+)-binding residues include His-63, Glu-66, and His-155. Residue Glu-219 is part of the active site.

The protein belongs to the AspA/AstE family. Succinylglutamate desuccinylase subfamily. It depends on Zn(2+) as a cofactor.

It carries out the reaction N-succinyl-L-glutamate + H2O = L-glutamate + succinate. It functions in the pathway amino-acid degradation; L-arginine degradation via AST pathway; L-glutamate and succinate from L-arginine: step 5/5. Its function is as follows. Transforms N(2)-succinylglutamate into succinate and glutamate. The sequence is that of Succinylglutamate desuccinylase from Vibrio cholerae serotype O1 (strain ATCC 39541 / Classical Ogawa 395 / O395).